The primary structure comprises 355 residues: Hyaluronan and proteoglycan link protein 1 (355 aa).

A propeptide spanning residues 1 to 9 is cleaved from the precursor; the sequence is MTSLLFLVL. Residues N21 and N56 are each glycosylated (N-linked (GlcNAc...) asparagine). Residues 38–156 form the Ig-like V-type domain; that stretch reads PRLLVVAEQA…EDDTAVVALN (119 aa). 5 disulfide bridges follow: C61-C140, C182-C253, C206-C227, C280-C350, and C305-C326. Link domains are found at residues 160 to 255 and 260 to 352; these read VVFP…FCFT and GRFY…YCFR.

It belongs to the HAPLN family.

It localises to the secreted. Its subcellular location is the extracellular space. The protein resides in the extracellular matrix. Its function is as follows. Stabilizes the aggregates of proteoglycan monomers with hyaluronic acid in the extracellular cartilage matrix. The polypeptide is Hyaluronan and proteoglycan link protein 1 (HAPLN1) (Gallus gallus (Chicken)).